Here is a 67-residue protein sequence, read N- to C-terminus: Prokaryotic ubiquitin-like protein Pup (67 aa).

Residues 1 to 36 (MPQQFEQPQAQQAVTQEDDALATTQAATQTESTDQA) show a composition bias toward low complexity. The interval 1–38 (MPQQFEQPQAQQAVTQEDDALATTQAATQTESTDQADV) is disordered. An ARC ATPase binding region spans residues 23–61 (TTQAATQTESTDQADVLDDILDDIESTLETNAEEYVNSF). Glu67 is covalently cross-linked (Isoglutamyl lysine isopeptide (Glu-Lys) (interchain with K-? in acceptor proteins)).

The protein belongs to the prokaryotic ubiquitin-like protein family. In terms of assembly, strongly interacts with the proteasome-associated ATPase ARC through a hydrophobic interface; the interacting region of Pup lies in its C-terminal half. There is one Pup binding site per ARC hexamer ring.

It participates in protein degradation; proteasomal Pup-dependent pathway. In terms of biological role, protein modifier that is covalently attached to lysine residues of substrate proteins, thereby targeting them for proteasomal degradation. The tagging system is termed pupylation. The sequence is that of Prokaryotic ubiquitin-like protein Pup from Bifidobacterium longum subsp. infantis (strain ATCC 15697 / DSM 20088 / JCM 1222 / NCTC 11817 / S12).